The sequence spans 195 residues: Capsid protein (195 aa).

The tract at residues 148–195 is disordered; that stretch reads NAPILSTLPETTVVRRRGRSPRRRTPSPRRRRSQSPRRRRSASPASQC. Over residues 161–188 the composition is skewed to basic residues; it reads VRRRGRSPRRRTPSPRRRRSQSPRRRRS. Ser167, Ser174, and Ser182 each carry phosphoserine; by host. A 1; half-length repeat occupies 167 to 172; that stretch reads SPRRRT. The interval 167 to 188 is 3 X 7 AA repeats of S-P-R-R-R-[PR]-S; sequence SPRRRTPSPRRRRSQSPRRRRS. A Bipartite nuclear localization signal motif is present at residues 170 to 187; the sequence is RRTPSPRRRRSQSPRRRR. Repeat copies occupy residues 174–180 and 182–188. Residues 189-195 form an RNA binding region; the sequence is ASPASQC.

This sequence belongs to the orthohepadnavirus core antigen family. In terms of assembly, homodimerizes, then multimerizes. Interacts with cytosol exposed regions of viral L glycoprotein present in the reticulum-to-Golgi compartment. Interacts with human FLNB. Phosphorylated form interacts with host importin alpha; this interaction depends on the exposure of the NLS, which itself depends upon genome maturation and/or phosphorylation of the capsid protein. Interacts with host NUP153. In terms of processing, phosphorylated by host SRPK1, SRPK2, and maybe protein kinase C or GAPDH. Phosphorylation is critical for pregenomic RNA packaging. Protein kinase C phosphorylation is stimulated by HBx protein and may play a role in transport of the viral genome to the nucleus at the late step during the viral replication cycle.

The protein resides in the virion. Its subcellular location is the host cytoplasm. Self assembles to form an icosahedral capsid. Most capsids appear to be large particles with an icosahedral symmetry of T=4 and consist of 240 copies of capsid protein, though a fraction forms smaller T=3 particles consisting of 180 capsid proteins. Entering capsids are transported along microtubules to the nucleus. Phosphorylation of the capsid is thought to induce exposure of nuclear localization signal in the C-terminal portion of the capsid protein that allows binding to the nuclear pore complex via the importin (karyopherin-) alpha and beta. Capsids are imported in intact form through the nuclear pore into the nuclear basket, where it probably binds NUP153. Only capsids that contain the mature viral genome can release the viral DNA and capsid protein into the nucleoplasm. Immature capsids get stuck in the basket. Capsids encapsulate the pre-genomic RNA and the P protein. Pre-genomic RNA is reverse-transcribed into DNA while the capsid is still in the cytoplasm. The capsid can then either be directed to the nucleus, providing more genomes for transcription, or bud through the endoplasmic reticulum to provide new virions. This Hepatitis B virus genotype G (isolate United States/USG17/2002) (HBV-G) protein is Capsid protein.